The primary structure comprises 64 residues: Tracheal antimicrobial peptide (64 aa).

A signal peptide spans 1–26 (MRLHHLLLALLFLVLSAWSGFTQGVG). Disulfide bonds link cysteine 31/cysteine 60, cysteine 38/cysteine 53, and cysteine 43/cysteine 61.

Belongs to the beta-defensin family. LAP/TAP subfamily. Tracheal epithelium.

Its subcellular location is the secreted. In terms of biological role, has antibacterial activity in vitro against Escherichia coli, Staphylococcus aureus, Klebsiella pneumonia, and Pseudomonas aeruginosa. In addition, the peptide is active against Candida albicans, indicating a broad spectrum of activity. The protein is Tracheal antimicrobial peptide of Bos taurus (Bovine).